The sequence spans 346 residues: Hexosaminidase D (346 aa).

Catalysis depends on E141, which acts as the Proton donor.

Belongs to the glycosyl hydrolase 20 family. Homodimer; disulfide-linked.

Its subcellular location is the cytoplasm. It is found in the nucleus. It localises to the extracellular vesicle. It catalyses the reaction Hydrolysis of terminal non-reducing N-acetyl-D-hexosamine residues in N-acetyl-beta-D-hexosaminides.. With respect to regulation, inhibited by O-(2-acetamido-2-deoxy-D-glucopyranosylidene)amino N-phenylcarbamate (PUGNAc). Inhibited by galacto-NAG-thiazoline. Its function is as follows. Has hexosaminidase activity. Responsible for the cleavage of the monosaccharides N-acetylglucosamine (GlcNAc) and N-acetylgalactosamine (GalNAc) from cellular substrates. Has a preference for galactosaminide over glucosaminide substrates. The sequence is that of Hexosaminidase D from Bos taurus (Bovine).